The following is a 306-amino-acid chain: Elongation factor Ts (306 aa).

Residues 81–84 form an involved in Mg(2+) ion dislocation from EF-Tu region; sequence TDFV.

Belongs to the EF-Ts family.

The protein resides in the cytoplasm. In terms of biological role, associates with the EF-Tu.GDP complex and induces the exchange of GDP to GTP. It remains bound to the aminoacyl-tRNA.EF-Tu.GTP complex up to the GTP hydrolysis stage on the ribosome. This chain is Elongation factor Ts, found in Polaromonas naphthalenivorans (strain CJ2).